A 143-amino-acid polypeptide reads, in one-letter code: Transcriptional regulator MraZ (143 aa).

2 SpoVT-AbrB domains span residues 5 to 47 and 76 to 119; these read TYTP…PRAE and TDEQ…DAQA.

Belongs to the MraZ family. Forms oligomers.

The protein localises to the cytoplasm. The protein resides in the nucleoid. In Mycobacterium avium (strain 104), this protein is Transcriptional regulator MraZ.